The chain runs to 533 residues: Thromboxane-A synthase (533 aa).

Residues 1-10 (MEVLGLLKFE) lie on the Cytoplasmic side of the membrane. A helical membrane pass occupies residues 11-31 (VSGTVVTVTLSVVLLALLKWY). Residues 32 to 75 (STSAFSRLRKLGIRHPEPSPFVGNLMFFRQGFWESHLELRERYG) lie on the Lumenal side of the membrane. A helical membrane pass occupies residues 76-96 (PLCGYYLGRRMYIVISDPDMI). At 97–223 (KEVLVENFSN…QRVFAFSTPR (127 aa)) the chain is on the cytoplasmic side. A helical membrane pass occupies residues 224–244 (PLLALILSFPSIMVPLARILP). Residues 245–335 (NKNRDELNGF…LTVDEIAGQA (91 aa)) lie on the Lumenal side of the membrane. The helical transmembrane segment at 336–356 (FLFLIAGHEITTNTLSFITYL) threads the bilayer. At 357–533 (LATHPECQER…NGVYVKIVSR (177 aa)) the chain is on the cytoplasmic side. Heme is bound at residue Cys-479.

It belongs to the cytochrome P450 family. Monomer. It depends on heme as a cofactor. As to expression, expressed in bone marrow, spleen, lung, thymus, liver, uterus, and macrophages.

It is found in the endoplasmic reticulum membrane. It catalyses the reaction prostaglandin H2 = thromboxane A2. It carries out the reaction prostaglandin H2 = (12S)-hydroxy-(5Z,8E,10E)-heptadecatrienoate + malonaldehyde. The enzyme catalyses a hydroperoxyeicosatetraenoate = an oxoeicosatetraenoate + H2O. The catalysed reaction is (15S)-hydroperoxy-(5Z,8Z,11Z,13E)-eicosatetraenoate = 15-oxo-(5Z,8Z,11Z,13E)-eicosatetraenoate + H2O. It catalyses the reaction (15S)-hydroperoxy-(5Z,8Z,11Z,13E)-eicosatetraenoate + AH2 = (15S)-hydroxy-(5Z,8Z,11Z,13E)-eicosatetraenoate + A + H2O. In terms of biological role, catalyzes the conversion of prostaglandin H2 (PGH2) to thromboxane A2 (TXA2), a potent inducer of blood vessel constriction and platelet aggregation. Also cleaves PGH2 to 12-hydroxy-heptadecatrienoicacid (12-HHT) and malondialdehyde, which is known to act as a mediator of DNA damage. 12-HHT and malondialdehyde are formed stoichiometrically in the same amounts as TXA2. Additionally, displays dehydratase activity, toward (15S)-hydroperoxy-(5Z,8Z,11Z,13E)-eicosatetraenoate (15(S)-HPETE) producing 15-KETE and 15-HETE. The protein is Thromboxane-A synthase (Tbxas1) of Rattus norvegicus (Rat).